The following is a 221-amino-acid chain: Sperm acrosome membrane-associated protein 3 (221 aa).

At 1–69 (MGICMSMYTQ…EARSRAPRRQ (69 aa)) the chain is on the cytoplasmic side. A helical; Signal-anchor for type II membrane protein membrane pass occupies residues 70–90 (LCPPGITWLALAYLLSCLLAS). Residues 91 to 221 (SKAKVFSRCE…LSDWVDGCDF (131 aa)) lie on the Extracellular side of the membrane. Residues 94–221 (KVFSRCELAK…LSDWVDGCDF (128 aa)) form the C-type lysozyme domain. Cystine bridges form between Cys99-Cys219, Cys123-Cys207, Cys157-Cys172, and Cys168-Cys186.

The protein belongs to the glycosyl hydrolase 22 family. As to quaternary structure, interacts with ASTL. The processed form is expressed in sperm (at protein level). Expressed strongly in testis and epididymis and weakly in pancreas.

It localises to the cytoplasmic vesicle. Its subcellular location is the secretory vesicle. The protein resides in the acrosome membrane. It is found in the secreted. Its function is as follows. Sperm surface membrane protein that may be involved in sperm-egg plasma membrane adhesion and fusion during fertilization. It could be a potential receptor for the egg oligosaccharide residue N-acetylglucosamine, which is present in the extracellular matrix over the egg plasma membrane. The processed form has no detectable bacteriolytic activity in vitro. The chain is Sperm acrosome membrane-associated protein 3 (Spaca3) from Mus musculus (Mouse).